The sequence spans 282 residues: 4-diphosphocytidyl-2-C-methyl-D-erythritol kinase (282 aa).

The active site involves Lys-12. Residue 95-105 (PMGGGIGGGSS) participates in ATP binding. Residue Asp-137 is part of the active site.

The protein belongs to the GHMP kinase family. IspE subfamily.

The enzyme catalyses 4-CDP-2-C-methyl-D-erythritol + ATP = 4-CDP-2-C-methyl-D-erythritol 2-phosphate + ADP + H(+). Its pathway is isoprenoid biosynthesis; isopentenyl diphosphate biosynthesis via DXP pathway; isopentenyl diphosphate from 1-deoxy-D-xylulose 5-phosphate: step 3/6. Functionally, catalyzes the phosphorylation of the position 2 hydroxy group of 4-diphosphocytidyl-2C-methyl-D-erythritol. This is 4-diphosphocytidyl-2-C-methyl-D-erythritol kinase from Pseudomonas aeruginosa (strain LESB58).